The chain runs to 57 residues: Potassium channel toxin KTx1 (57 aa).

An N-terminal signal peptide occupies residues F1 to A13. The propeptide occupies E14–G18. 3 disulfide bridges follow: C24–C37, C30–C42, and C36–C51.

The protein belongs to the scorpion calcin-like family. KTX subfamily. As to expression, expressed by the venom gland.

It is found in the secreted. This recombinant peptide inhibits voltage-gated potassium channels mKv1.3/KCNA3 (IC(50)=1.70 uM), mKv1.1/KCNA1 (10 uM inhibits 40% of currents) and hKv1.2/KCNA2 (10 uM inhibits 42% of currents). May also increase intracellular calcium release through the activation of nuclear inositol 1,4,5-trisphosphate receptors (ITPR) of cardiomyocytes, thereby causing an increase in the contraction frequency of these cells. In Isometrus maculatus (Lesser brown scorpion), this protein is Potassium channel toxin KTx1.